Reading from the N-terminus, the 381-residue chain is L-lactate dehydrogenase (381 aa).

Positions 1-380 (MIISASTDYR…NRDSLAVSER (380 aa)) constitute an FMN hydroxy acid dehydrogenase domain. Y24 contributes to the substrate binding site. Residues S106 and Q127 each coordinate FMN. Residue Y129 participates in substrate binding. Residue T155 coordinates FMN. Position 164 (R164) interacts with substrate. K251 contacts FMN. H275 functions as the Proton acceptor in the catalytic mechanism. R278 serves as a coordination point for substrate. 306-330 (DSGIRTGLDVVRMIALGADSVLLGR) contacts FMN.

It belongs to the FMN-dependent alpha-hydroxy acid dehydrogenase family. The cofactor is FMN.

It localises to the cell inner membrane. The enzyme catalyses (S)-lactate + A = pyruvate + AH2. Functionally, catalyzes the conversion of L-lactate to pyruvate. Is coupled to the respiratory chain. This is L-lactate dehydrogenase from Yersinia pseudotuberculosis serotype O:1b (strain IP 31758).